Reading from the N-terminus, the 364-residue chain is F-box protein At1g59680 (364 aa).

Residues 2 to 49 (TTMSDLSVDLVGEILSRVPLTSLSAVRCTCKSWNTLSKHQIFGKAELA) enclose the F-box domain.

This is F-box protein At1g59680 from Arabidopsis thaliana (Mouse-ear cress).